Here is a 124-residue protein sequence, read N- to C-terminus: Seripauperin-17 (124 aa).

Residues M1 to A20 form the signal peptide.

The protein belongs to the SRP1/TIP1 family. Seripauperin subfamily.

This Saccharomyces cerevisiae (strain ATCC 204508 / S288c) (Baker's yeast) protein is Seripauperin-17 (PAU17).